The primary structure comprises 341 residues: MIEFRQVSKSFHKKKQTIDALKDVSFTVNRNDIFGVIGYSGAGKSTLVRLVNHLEAASNGQVIVDGHDITNYSDKMMRDIKKDIGMIFQHFNLLNSATVFKNVAMPLILSKKSKTEIKQRVTEMLEFVGLSDKKDQFPDELSGGQKQRVAIARALVTNPKILLCDEATSALDPATTASILTLLKNVNQTFGITIMMITHEMRVIKDICNRVAVMEKGQVVETGTVKEVFSHPKTTIAQNFVSTVIQTEPSPSLIRRLNDKQVGDFKDYKIFVEETQMTQPIINDLIQICGREVKILFSSMSEIQGNTVCYMWLRFNMDQQFDGTAINQYFKEKNIQFEEVH.

Positions Ile-2–Val-241 constitute an ABC transporter domain. Residue Gly-38–Ser-45 coordinates ATP.

Belongs to the ABC transporter superfamily. Methionine importer (TC 3.A.1.24) family. In terms of assembly, the complex is composed of two ATP-binding proteins (MetN), two transmembrane proteins (MetI) and a solute-binding protein (MetQ).

It localises to the cell membrane. The enzyme catalyses L-methionine(out) + ATP + H2O = L-methionine(in) + ADP + phosphate + H(+). It catalyses the reaction D-methionine(out) + ATP + H2O = D-methionine(in) + ADP + phosphate + H(+). Functionally, part of the ABC transporter complex MetNIQ involved in methionine import. Responsible for energy coupling to the transport system. The polypeptide is Methionine import ATP-binding protein MetN 1 (Staphylococcus aureus (strain MRSA252)).